Reading from the N-terminus, the 573-residue chain is Ascochitine biosynthesis cluster transcriptional regulator (573 aa).

Its subcellular location is the nucleus. Transcription factor that regulates the expression of the gene cluster that mediates the biosynthesis of the mycotoxin ascochitine, an o-quinone methide that plays a possible protective role against other microbial competitors in nature and is considered to be important for pathogenicity of legume-associated Didymella species. The sequence is that of Ascochitine biosynthesis cluster transcriptional regulator from Didymella fabae (Leaf and pod spot disease fungus).